The primary structure comprises 944 residues: Trehalose monomycolate exporter MmpL3 (944 aa).

The Cytoplasmic portion of the chain corresponds to 1-13 (MFAWWGRTVYRYR). A helical transmembrane segment spans residues 14 to 34 (FIVIGVMVALCLGGGVFGLSL). Residues 35-185 (GKHVTQSGFY…TIATDQRRME (151 aa)) lie on the Periplasmic side of the membrane. 40-44 (QSGFY) is a binding site for a 1,2-diacylglycero-3-phosphoethanolamine. The helical transmembrane segment at 186–206 (VLALPLVAVVLFFVFGGVIAA) threads the bilayer. Over 207 to 209 (GLP) the chain is Cytoplasmic. A helical membrane pass occupies residues 210–230 (VMVGGLCIAGALGIMRFLAIF). Topologically, residues 231–235 (GPVHY) are periplasmic. The helical transmembrane segment at 236 to 256 (FAQPVVSLIGLGIAIDYGLFI) threads the bilayer. Over 257-286 (VSRFREEIAEGYDTETAVRRTVITAGRTVT) the chain is Cytoplasmic. A helical membrane pass occupies residues 287–307 (FSAVLIVASAIGLLLFPQGFL). Over 308-314 (KSLTYAT) the chain is Periplasmic. The chain crosses the membrane as a helical span at residues 315 to 335 (IASVMLSAILSITVLPACLGI). Residues 336 to 396 (LGKHVDALGV…KLVNRVMKRP (61 aa)) are Cytoplasmic-facing. The helical transmembrane segment at 397–417 (VLFAAPIVIIMILLIIPVGKL) threads the bilayer. The Periplasmic segment spans residues 418 to 562 (SLGGISEKYL…HGLFAKMPLM (145 aa)). Residues 563–583 (VVILLTTTIVLMFLAFGSVVL) traverse the membrane as a helical segment. Over 584 to 586 (PIK) the chain is Cytoplasmic. A helical membrane pass occupies residues 587 to 607 (ATLMSALTLGSTMGILTWIFV). Residues 608-616 (DGHFSKWLN) are Periplasmic-facing. The helical transmembrane segment at 617 to 637 (FTPTPLTAPVIGLIIALVFGL) threads the bilayer. The Cytoplasmic segment spans residues 638 to 672 (STDYEVFLVSRMVEARERGMSTQEAIRIGTAATGR). Residues 673-693 (IITAAALIVAVVAGAFVFSDL) form a helical membrane-spanning segment. Residues 694-698 (VMMKY) are Periplasmic-facing. A helical transmembrane segment spans residues 699-719 (LAFGLMAALLLDATVVRMFLV). At 720 to 944 (PSVMKLLGDD…QDLLRREGRL (225 aa)) the chain is on the cytoplasmic side. The segment at 778 to 944 (AAGDPRPPHD…QDLLRREGRL (167 aa)) is disordered. A compositionally biased stretch (low complexity) spans 791 to 828 (PLAESPRPARSSPASSPELTPALEATAAPAAPSGASTT). Polar residues predominate over residues 829–839 (RMQIGSSTEPP). Residues 855–866 (STPPPTPTPPSA) show a composition bias toward pro residues.

It belongs to the resistance-nodulation-cell division (RND) (TC 2.A.6) family. MmpL subfamily. Monomer. Interacts with TtfA (via N-terminus); active trehalose monomycolate (TMM) biosynthesis is not required for the complex formation.

It localises to the cell inner membrane. Its subcellular location is the cell septum. The protein resides in the cell tip. Inhibited by the antitubercular drug SQ109. Also inhibited by several other compounds such as the pyrrole derivative BM212, the adamantyl urea derivative AU1235, the benzimidazole C215, indoleamides, tetrahydropyrazolo[1,5-a]pyrimidine-3-carboxamide (THPP) and N-benzyl-6',7'-dihydrospiro[piperidine-4,4'-thieno[3,2-c]pyran] (Spiro) analogs. Inhibitory effects of these compounds, including SQ109, are most likely due to their ability to dissipate the transmembrane electrochemical proton gradient. Functionally, transports trehalose monomycolate (TMM) to the cell wall. Flips TMM across the inner membrane. Membrane potential is not required for this function. Transports probably phosphatidylethanolamine (PE) as well. Binds specifically both TMM and PE, but not trehalose dimycolate (TDM). Also binds diacylglycerol (DAG) and other phospholipids, including phosphatidylglycerol (PG), phosphatidylinositol (PI), and cardiolipin (CDL). Contributes to membrane potential, cell wall composition, antibiotic susceptibility and fitness. Could also be part of a heme-iron acquisition system. Its function is as follows. Is the target of the antitubercular drug SQ109. The polypeptide is Trehalose monomycolate exporter MmpL3 (mmpL3) (Mycobacterium tuberculosis (strain ATCC 25618 / H37Rv)).